A 257-amino-acid chain; its full sequence is UPF0246 protein Lcho_2652 (257 aa).

The protein belongs to the UPF0246 family.

The chain is UPF0246 protein Lcho_2652 from Leptothrix cholodnii (strain ATCC 51168 / LMG 8142 / SP-6) (Leptothrix discophora (strain SP-6)).